A 387-amino-acid chain; its full sequence is Eukaryotic translation initiation factor 3 subunit M (387 aa).

Residues 181-340 (LSSKVMIELL…RKVHISSTMH (160 aa)) form the PCI domain.

Belongs to the eIF-3 subunit M family. As to quaternary structure, component of the eukaryotic translation initiation factor 3 (eIF-3) complex. The eIF-3 complex interacts with pix.

Its subcellular location is the cytoplasm. The protein localises to the golgi apparatus. Functionally, component of the eukaryotic translation initiation factor 3 (eIF-3) complex, which is involved in protein synthesis of a specialized repertoire of mRNAs and, together with other initiation factors, stimulates binding of mRNA and methionyl-tRNAi to the 40S ribosome. The eIF-3 complex specifically targets and initiates translation of a subset of mRNAs involved in cell proliferation. The polypeptide is Eukaryotic translation initiation factor 3 subunit M (Drosophila ananassae (Fruit fly)).